We begin with the raw amino-acid sequence, 152 residues long: Small ribosomal subunit protein bS6 (152 aa).

A disordered region spans residues 96–152; the sequence is HEEGPSAMLQKRDRDDRGPREGGDRGPRREFGDRPPRRDGDFQRGPRPDRAPREDRA.

It belongs to the bacterial ribosomal protein bS6 family.

Binds together with bS18 to 16S ribosomal RNA. This Rhizobium etli (strain CIAT 652) protein is Small ribosomal subunit protein bS6.